The sequence spans 309 residues: Putative S-adenosyl-L-methionine-dependent methyltransferase Mflv_0743 (309 aa).

S-adenosyl-L-methionine is bound by residues Asp-134 and 163-164 (DL).

The protein belongs to the UPF0677 family.

Its function is as follows. Exhibits S-adenosyl-L-methionine-dependent methyltransferase activity. This chain is Putative S-adenosyl-L-methionine-dependent methyltransferase Mflv_0743, found in Mycolicibacterium gilvum (strain PYR-GCK) (Mycobacterium gilvum (strain PYR-GCK)).